A 606-amino-acid polypeptide reads, in one-letter code: Membrane protein insertase YidC (606 aa).

Residues 8-28 (LILATALSFLVILVWFLLFPP) form a helical membrane-spanning segment. The span at 59-78 (TEAAPGAAPQTAATPTENAP) shows a compositional bias: low complexity. The segment at 59–79 (TEAAPGAAPQTAATPTENAPR) is disordered. 4 helical membrane passes run 378 to 398 (MGVA…PLAW), 448 to 468 (LPIL…FVTI), 506 to 526 (SILA…SMWL), and 542 to 562 (IFAW…SGLI).

It belongs to the OXA1/ALB3/YidC family. Type 1 subfamily. As to quaternary structure, interacts with the Sec translocase complex via SecD. Specifically interacts with transmembrane segments of nascent integral membrane proteins during membrane integration.

The protein localises to the cell inner membrane. In terms of biological role, required for the insertion and/or proper folding and/or complex formation of integral membrane proteins into the membrane. Involved in integration of membrane proteins that insert both dependently and independently of the Sec translocase complex, as well as at least some lipoproteins. Aids folding of multispanning membrane proteins. This chain is Membrane protein insertase YidC, found in Dinoroseobacter shibae (strain DSM 16493 / NCIMB 14021 / DFL 12).